Consider the following 463-residue polypeptide: Glycine--tRNA ligase (463 aa).

Substrate is bound by residues Arg-98 and Glu-174. Residues 206 to 208 (RNE), 216 to 221 (FRTREF), 290 to 291 (EL), and 334 to 337 (GADR) contribute to the ATP site. A substrate-binding site is contributed by 221–225 (FEQME). 330 to 334 (EPSLG) provides a ligand contact to substrate.

Belongs to the class-II aminoacyl-tRNA synthetase family. In terms of assembly, homodimer.

The protein resides in the cytoplasm. It catalyses the reaction tRNA(Gly) + glycine + ATP = glycyl-tRNA(Gly) + AMP + diphosphate. Functionally, catalyzes the attachment of glycine to tRNA(Gly). This chain is Glycine--tRNA ligase, found in Staphylococcus aureus (strain bovine RF122 / ET3-1).